Consider the following 460-residue polypeptide: DNA repair protein RadA (460 aa).

Residues 11–28 form a C4-type zinc finger; the sequence is CNECGADYPRWQGQCSAC. 102 to 109 is an ATP binding site; that stretch reads GNPGAGKS. The RadA KNRFG motif signature appears at 258 to 262; the sequence is KNRFG. The tract at residues 357-460 is lon-protease-like; the sequence is DVFVNVVGGV…SDALSVFDDL (104 aa).

Belongs to the RecA family. RadA subfamily.

Its function is as follows. DNA-dependent ATPase involved in processing of recombination intermediates, plays a role in repairing DNA breaks. Stimulates the branch migration of RecA-mediated strand transfer reactions, allowing the 3' invading strand to extend heteroduplex DNA faster. Binds ssDNA in the presence of ADP but not other nucleotides, has ATPase activity that is stimulated by ssDNA and various branched DNA structures, but inhibited by SSB. Does not have RecA's homology-searching function. Genetic experiments involving combination of radA mutations with mutations in recA, recB, recG, recJ, recQ, ruvA and ruvC show it plays a role in recombination and recombinational repair, probably involving stabilizing or processing branched DNA or blocked replication forks. Is genetically synergistic to RecG and RuvABC. May be involved in recovery of genetic rearrangements during replication fork breakdown. In combination with RadD is important in recovery from double-strand DNA breaks (DSB). The sequence is that of DNA repair protein RadA from Escherichia coli (strain K12).